We begin with the raw amino-acid sequence, 499 residues long: E3 ubiquitin-protein ligase TRIM69 (499 aa).

The tract at residues 1–152 (MEVSSRPPSN…SMGQSKDFLQ (152 aa)) is necessary for nuclear localization. The RING-type zinc finger occupies 41 to 82 (CPLCNDWFRDPLMLTCGHNFCQACIQNYWKMQAKETFCPECK). Residues 160-265 (FTEELAIYQS…NIQARMEQQN (106 aa)) adopt a coiled-coil conformation. The B30.2/SPRY domain occupies 305-499 (PIQYTIWREM…KEPLHIVHPQ (195 aa)). Serine 341 is subject to Phosphoserine.

This sequence belongs to the TRIM/RBCC family. Homo-multimer; required for antiviral activity. Interacts with PML. Phosphorylated. Phosphorylation is necessary for nuclear localization.

Its subcellular location is the cytoplasm. The protein localises to the nucleus. The protein resides in the nucleus speckle. It localises to the cytoskeleton. It is found in the microtubule organizing center. Its subcellular location is the centrosome. It carries out the reaction S-ubiquitinyl-[E2 ubiquitin-conjugating enzyme]-L-cysteine + [acceptor protein]-L-lysine = [E2 ubiquitin-conjugating enzyme]-L-cysteine + N(6)-ubiquitinyl-[acceptor protein]-L-lysine.. Its pathway is protein modification; protein ubiquitination. Functionally, E3 ubiquitin ligase that plays an important role in antiviral immunity by restricting different viral infections including dengue virus or vesicular stomatitis indiana virus. Ubiquitinates viral proteins such as dengue virus NS3 thereby limiting infection. In addition, acts as a key mediator of type I interferon induced microtubule stabilization by directly associating to microtubules independently of its E3 ligase activity. Also plays a role in cataract formation together with TP53. Mechanistically, inhibits UVB-induced cell apoptosis and reactive oxygen species (ROS) production by inducing TP53 ubiquitination. Regulates centrosome dynamics and mitotic progression by ubiquitinating STK3/MST2; leading to its redistribution to the perinuclear cytoskeleton and subsequent phosphorylation by PLK1. The protein is E3 ubiquitin-protein ligase TRIM69 (Trim69) of Rattus norvegicus (Rat).